The primary structure comprises 231 residues: Ion-translocating oxidoreductase complex subunit E (231 aa).

6 helical membrane-spanning segments follow: residues 18–38 (ALVQ…ATNA), 39–59 (LGLG…ISTL), 63–83 (TPAE…VSAV), 86–106 (LINA…PLIV), 125–145 (ALSA…MCVL), and 182–202 (PFLL…MLAG).

This sequence belongs to the NqrDE/RnfAE family. In terms of assembly, the complex is composed of six subunits: RsxA, RsxB, RsxC, RsxD, RsxE and RsxG.

The protein resides in the cell inner membrane. Part of a membrane-bound complex that couples electron transfer with translocation of ions across the membrane. Required to maintain the reduced state of SoxR. In Escherichia coli (strain SMS-3-5 / SECEC), this protein is Ion-translocating oxidoreductase complex subunit E.